Consider the following 392-residue polypeptide: Selenide, water dikinase 1 (392 aa).

N-acetylserine is present on serine 2. Cysteine 31 is an active-site residue. Residues lysine 32, 67–69 (GMD), aspartate 87, aspartate 110, and 161–164 (GGQT) each bind ATP. Aspartate 69 contributes to the Mg(2+) binding site. Residue aspartate 110 participates in Mg(2+) binding. Aspartate 265 contacts Mg(2+).

The protein belongs to the selenophosphate synthase 1 family. Class II subfamily. Homodimer. It depends on Mg(2+) as a cofactor.

It is found in the cell membrane. The protein localises to the nucleus membrane. The enzyme catalyses hydrogenselenide + ATP + H2O = selenophosphate + AMP + phosphate + 2 H(+). Its function is as follows. Synthesizes selenophosphate from selenide and ATP. The polypeptide is Selenide, water dikinase 1 (Sephs1) (Mus musculus (Mouse)).